The chain runs to 410 residues: Regulator of microtubule dynamics protein 2 (410 aa).

Residues 9–28 (LILGIMAGTAGISLLAFWYH) traverse the membrane as a helical segment. Ser-51 is modified (phosphoserine). Residues 69–110 (QRRQLQILEKLNELLTNMEELKEEIRFLKETIPKLEECIQDE) adopt a coiled-coil conformation. Residues 120-151 (ISPQHRARKKKGTTVQRSATSNSSEEAESEGG) form a disordered region. Ser-121 carries the phosphoserine modification. Residues 121–131 (SPQHRARKKKG) show a composition bias toward basic residues. Thr-139 carries the post-translational modification Phosphothreonine. Tyr-152 carries the phosphotyrosine modification. 2 positions are modified to phosphothreonine: Thr-154 and Thr-157.

It belongs to the RMDN family. As to quaternary structure, interacts with microtubules.

It is found in the membrane. The protein resides in the cytoplasm. Its subcellular location is the cytoskeleton. It localises to the spindle. The protein localises to the spindle pole. The sequence is that of Regulator of microtubule dynamics protein 2 (Rmdn2) from Mus musculus (Mouse).